A 500-amino-acid chain; its full sequence is ATP synthase subunit alpha (500 aa).

ATP is bound at residue 169 to 176 (GDRQTGKT).

Belongs to the ATPase alpha/beta chains family. As to quaternary structure, F-type ATPases have 2 components, CF(1) - the catalytic core - and CF(0) - the membrane proton channel. CF(1) has five subunits: alpha(3), beta(3), gamma(1), delta(1), epsilon(1). CF(0) has three main subunits: a(1), b(2) and c(9-12). The alpha and beta chains form an alternating ring which encloses part of the gamma chain. CF(1) is attached to CF(0) by a central stalk formed by the gamma and epsilon chains, while a peripheral stalk is formed by the delta and b chains.

The protein localises to the cell membrane. The catalysed reaction is ATP + H2O + 4 H(+)(in) = ADP + phosphate + 5 H(+)(out). Produces ATP from ADP in the presence of a proton gradient across the membrane. The alpha chain is a regulatory subunit. The sequence is that of ATP synthase subunit alpha from Lactococcus lactis subsp. cremoris (strain SK11).